Here is a 228-residue protein sequence, read N- to C-terminus: uncharacterized protein (228 aa).

The protein localises to the mitochondrion. This is an uncharacterized protein from Emericella nidulans (Aspergillus nidulans).